Here is a 489-residue protein sequence, read N- to C-terminus: MRRRITFVQRPESPFHVDQAVLTSDALSITHLDAAREERATFGFDELPAEIWQVLKSSHELHIRWATERPYEIGAPFSSRISPGLHVYYTPGTARETGVGLCSLLKTVFDESLECQSLRYYSRLPSLQNLVAFIQHKFCDRSDEKCVHHAESILSADSVDVNYDSISHALTVSGYWSTSPGQGWTEQIRKHAADTHQVEVGLLGVESATEPEELKMEPTLFSFPSRHHPLPADATYTVSFPAPTGLHPTLTISMPRASLRRPPAPPDATCALHTYLTLPSWIFGDKYQLSTTDRLFLSSHNLAALRAVAGETDLEAPDWVVSRWGSNWLLELATPLRPDTSPEEWNASIPLHLRYLTPSESGYRSAAVPWPIVFWACTAEDGTKMGVNPFDRVNLGWEGLFGARTMFYQLHPAPAEGKDRLVEELDVPVLRLREDAGFFQSKTIELGTVVVVGLGLLWVLWKLGLVLWIAGTGRSTRAQKRTDKHRKAE.

Over 1-448 (MRRRITFVQR…FQSKTIELGT (448 aa)) the chain is Lumenal. An N-linked (GlcNAc...) asparagine glycan is attached at N346. A helical transmembrane segment spans residues 449 to 469 (VVVVGLGLLWVLWKLGLVLWI). The Cytoplasmic portion of the chain corresponds to 470–489 (AGTGRSTRAQKRTDKHRKAE).

It belongs to the PIGX family.

The protein localises to the endoplasmic reticulum membrane. Its pathway is glycolipid biosynthesis; glycosylphosphatidylinositol-anchor biosynthesis. Its function is as follows. Required for proper folding and/or the stability of a subset of proteins in the endoplasmic reticulum. Component of glycosylphosphatidylinositol-mannosyltransferase 1 which transfers the first of the 4 mannoses in the GPI-anchor precursors during GPI-anchor biosynthesis. Probably acts by stabilizing the mannosyltransferase gpi14. The sequence is that of Protein pbn1 (pbn1) from Aspergillus fumigatus (strain ATCC MYA-4609 / CBS 101355 / FGSC A1100 / Af293) (Neosartorya fumigata).